Consider the following 232-residue polypeptide: Ribonuclease 3 (232 aa).

Residues 5–134 (QTVLKNHFAI…FLGALLLDKD (130 aa)) enclose the RNase III domain. Glu-47 contributes to the Mg(2+) binding site. Residue Asp-51 is part of the active site. 2 residues coordinate Mg(2+): Asp-120 and Glu-123. Glu-123 is a catalytic residue. Residues 160–229 (DYKTHLQELL…AKNAVEKGLD (70 aa)) form the DRBM domain.

It belongs to the ribonuclease III family. In terms of assembly, homodimer. Mg(2+) serves as cofactor.

The protein resides in the cytoplasm. It catalyses the reaction Endonucleolytic cleavage to 5'-phosphomonoester.. In terms of biological role, digests double-stranded RNA. Involved in the processing of primary rRNA transcript to yield the immediate precursors to the large and small rRNAs (23S and 16S). Processes some mRNAs, and tRNAs when they are encoded in the rRNA operon. Processes pre-crRNA and tracrRNA of type II CRISPR loci if present in the organism. In Streptococcus pneumoniae (strain Hungary19A-6), this protein is Ribonuclease 3.